A 456-amino-acid chain; its full sequence is Protein king tubby (456 aa).

Positions 111-202 (HELEDEESSP…SNGAGGESEG (92 aa)) are disordered. A compositionally biased stretch (polar residues) spans 120–152 (PVTVIEQQQTAPHSANSTHSQRPSTTRQPSFND). At Ser-149 the chain carries Phosphoserine.

It belongs to the TUB family.

It localises to the cytoplasm. The protein resides in the nucleus. Its subcellular location is the cell projection. It is found in the cilium membrane. The protein localises to the rhabdomere. This is Protein king tubby from Drosophila pseudoobscura pseudoobscura (Fruit fly).